Consider the following 428-residue polypeptide: C4-dicarboxylate transport protein (428 aa).

9 consecutive transmembrane segments (helical) span residues 8-28 (SLYVQVLTAIAIGILLGHFYP), 44-64 (LIKMVIAPVIFCTVVTGIAGM), 76-96 (VALLYFEVVSTIALIIGLIIV), 142-162 (IGAFASGNILQVLLFAVLFGF), 184-204 (VIFGIINMIMRLAPIGAFGAM), 222-242 (LIICFYITCILFVVVVLGSIA), 289-309 (VVGLVIPTGYSFNLDGTSIYL), 326-346 (IFHQITLLVVLLLSSKGAAGV), and 352-372 (IVLAATISAVGHLPVAGLALI).

This sequence belongs to the dicarboxylate/amino acid:cation symporter (DAACS) (TC 2.A.23) family.

The protein localises to the cell inner membrane. Its function is as follows. Responsible for the transport of dicarboxylates such as succinate, fumarate, and malate from the periplasm across the membrane. The sequence is that of C4-dicarboxylate transport protein from Klebsiella pneumoniae subsp. pneumoniae (strain ATCC 700721 / MGH 78578).